Reading from the N-terminus, the 310-residue chain is S-adenosylmethionine-dependent nucleotide dehydratase (310 aa).

The Radical SAM core domain maps to 3 to 221 (PAIPPTINLH…VERHRKVESS (219 aa)). Residues Cys-17, Cys-21, and Cys-24 each coordinate [4Fe-4S] cluster.

The protein belongs to the radical SAM superfamily. Viperin family. [4Fe-4S] cluster is required as a cofactor.

The enzyme catalyses GTP + AH2 + S-adenosyl-L-methionine = 3'-deoxy-3',4'-didehydro-GTP + 5'-deoxyadenosine + L-methionine + A + H2O + H(+). Expression of pVip15 in E.coli (strain MG1655) confers resistance to phage T7; prevents culture collapse upon infection. Catalyzes the conversion of guanosine triphosphate (GTP) to 3'-deoxy-3',4'-didehydro-GTP (ddhGTP), probably via a SAM-dependent radical mechanism. The modified nucleotide represses transcription from T7 RNA polymerase-directed genes (possibly by acting as chain terminators), strongly suggesting these nucleotides block viral polymerase transcription. In Coraliomargarita akajimensis (strain DSM 45221 / IAM 15411 / JCM 23193 / KCTC 12865 / 04OKA010-24), this protein is S-adenosylmethionine-dependent nucleotide dehydratase.